A 289-amino-acid chain; its full sequence is Putative 2-aminoethylphosphonate transport system permease protein PhnU (289 aa).

A run of 6 helical transmembrane segments spans residues 19-39 (WLLL…SLIV), 76-96 (FFAT…LVFI), 111-131 (FIAL…GSAG), 150-170 (FLYS…PLVM), 202-222 (VIFP…LLLT), and 254-274 (YTVA…LFSL). Residues 68–275 (LLNTLQIAFF…VLSLGLFSLY (208 aa)) enclose the ABC transmembrane type-1 domain.

Belongs to the binding-protein-dependent transport system permease family.

The protein resides in the cell inner membrane. Probably part of the PhnSTUV complex (TC 3.A.1.11.5) involved in 2-aminoethylphosphonate import. Probably responsible for the translocation of the substrate across the membrane. This is Putative 2-aminoethylphosphonate transport system permease protein PhnU (phnU) from Salmonella typhi.